Reading from the N-terminus, the 435-residue chain is 5'-deoxyadenosine deaminase (435 aa).

Zn(2+) contacts are provided by His-64 and His-66. 2 residues coordinate substrate: Glu-93 and His-185. His-212 provides a ligand contact to Zn(2+). Glu-215 and Asp-300 together coordinate substrate. Residue Asp-300 coordinates Zn(2+).

It belongs to the metallo-dependent hydrolases superfamily. MTA/SAH deaminase family. Homotetramer. Zn(2+) is required as a cofactor.

The enzyme catalyses 5'-deoxyadenosine + H2O + H(+) = 5'-deoxyinosine + NH4(+). It catalyses the reaction S-adenosyl-L-homocysteine + H2O + H(+) = S-inosyl-L-homocysteine + NH4(+). The catalysed reaction is S-methyl-5'-thioadenosine + H2O + H(+) = S-methyl-5'-thioinosine + NH4(+). It carries out the reaction adenosine + H2O + H(+) = inosine + NH4(+). It participates in amino-acid biosynthesis; S-adenosyl-L-methionine biosynthesis. Catalyzes the deamination of three SAM-derived enzymatic products, namely 5'-deoxyadenosine, S-adenosyl-L-homocysteine, and 5'-methylthioadenosine, to produce the inosine analogs. Can also deaminate adenosine. The preferred substrate for this enzyme is 5'-deoxyadenosine, but all these substrates are efficiently deaminated. Likely functions in a S-adenosyl-L-methionine (SAM) recycling pathway from S-adenosyl-L-homocysteine (SAH) produced from SAM-dependent methylation reactions. May also be involved in the recycling of 5'-deoxyadenosine, whereupon the 5'-deoxyribose moiety of 5'-deoxyinosine is further metabolized to deoxyhexoses used for the biosynthesis of aromatic amino acids in methanogens. This chain is 5'-deoxyadenosine deaminase, found in Methanobrevibacter smithii (strain ATCC 35061 / DSM 861 / OCM 144 / PS).